The sequence spans 52 residues: Conotoxin-like peptide 2 (52 aa).

Positions 1 to 18 are cleaved as a signal peptide; it reads MKFSTILLLVCPTVALSA. 3 cysteine pairs are disulfide-bonded: cysteine 24-cysteine 38, cysteine 31-cysteine 42, and cysteine 37-cysteine 49.

The protein localises to the secreted. This is Conotoxin-like peptide 2 (CTL-2) from Orgyia pseudotsugata (Douglas-fir tussock moth).